We begin with the raw amino-acid sequence, 251 residues long: Phosphosulfolactate synthase (251 aa).

Belongs to the phosphosulfolactate synthase family. Homotrimer. Mg(2+) is required as a cofactor.

The enzyme catalyses (2R)-O-phospho-3-sulfolactate = phosphoenolpyruvate + sulfite + H(+). It functions in the pathway cofactor biosynthesis; coenzyme M biosynthesis; sulfoacetaldehyde from phosphoenolpyruvate and sulfite: step 1/4. In terms of biological role, catalyzes the addition of sulfite to phosphoenolpyruvate (PEP) to yield (2R)-phospho-3-sulfolactate (PSL). This chain is Phosphosulfolactate synthase (comA), found in Methanocaldococcus jannaschii (strain ATCC 43067 / DSM 2661 / JAL-1 / JCM 10045 / NBRC 100440) (Methanococcus jannaschii).